The primary structure comprises 491 residues: MKSIMVVGTTSHAGKSLISTAICRILSRRGWRVAPFKGQNMALNAYVTANGGEIGYAQAVQAWAAGVVPWVEMNPILLKPQGDMTSQVIIRGRPVGRVNAADYYEQYFEPGWRAIEESLQHLGTEFDLVVCEGAGSPAEINLKHRDLTNMRVAKYLNAPTLLVVDIDRGGAFAHVVGTLELLEPEERQLIKGVVINKFRGQRSLLDPGIKWLEERTGIPVVGVIPYLQEIFPAEDSLDLLERKTHKAHADLQITVVRLPRIANFTDFDPLESEPTVAVKYISPKQDLGHPDAVILPGTKTTIADLILLQKTGMAEAIQNYAASGGTVLGICGGYQILGQMIADPEGIEGQAGRYQGLNLLPIRTVITGQKIARQRQVSSNFPQLGLPVNGFEIHQGRSRVEPQGDSQAFQPLFDDVNLGLVDSCQSVWGSYLHGLFDNGPWRRAWLNRLRQQRGLKSLPTGVANYREQREQMLDNIATEVENHLDLTLFLP.

Residues 250–441 enclose the GATase cobBQ-type domain; sequence DLQITVVRLP…LHGLFDNGPW (192 aa). Cys331 (nucleophile) is an active-site residue. His433 is a catalytic residue.

Belongs to the CobB/CobQ family. CobQ subfamily.

Its pathway is cofactor biosynthesis; adenosylcobalamin biosynthesis. In terms of biological role, catalyzes amidations at positions B, D, E, and G on adenosylcobyrinic A,C-diamide. NH(2) groups are provided by glutamine, and one molecule of ATP is hydrogenolyzed for each amidation. This is Cobyric acid synthase from Trichormus variabilis (strain ATCC 29413 / PCC 7937) (Anabaena variabilis).